A 123-amino-acid polypeptide reads, in one-letter code: Galanin peptides (123 aa).

The signal sequence occupies residues 1 to 19 (MARGSALLLASLLLAAALS). Residues 20 to 30 (ASAGLWSPAKE) constitute a propeptide that is removed on maturation. Residues 46–80 (HAVGNHRSFSDKNGLTSKRELRPEDDMKPGSFDRS) are disordered. Residues 62 to 73 (SKRELRPEDDMK) show a composition bias toward basic and acidic residues. A phosphoserine mark is found at Ser116 and Ser117.

It belongs to the galanin family.

Its subcellular location is the secreted. In terms of biological role, endocrine hormone of the central and peripheral nervous systems that binds and activates the G protein-coupled receptors GALR1, GALR2, and GALR3. This small neuropeptide may regulate diverse physiologic functions including contraction of smooth muscle of the gastrointestinal and genitourinary tract, growth hormone and insulin release and adrenal secretion. The protein is Galanin peptides (GAL) of Homo sapiens (Human).